Consider the following 227-residue polypeptide: Charged multivesicular body protein 4c (227 aa).

The tract at residues 1 to 27 (MSKITKLFKSSGGSGSSSKNRKGPSAQ) is disordered. Coiled-coil stretches lie at residues 32-94 (KLRE…STIE) and 129-187 (LEKI…MANV). The tract at residues 178-227 (EDLNSQMANVNLPSVPSSKLPSTKLPSRPASSRKKVEDDDDMQMLAAWAT) is disordered. The span at 189–206 (LPSVPSSKLPSTKLPSRP) shows a compositional bias: low complexity.

Belongs to the SNF7 family. As to quaternary structure, probable core component of the endosomal sorting required for transport complex III (ESCRT-III). ESCRT-III components are thought to multimerize to form a flat lattice on the perimeter membrane of the endosome.

Its subcellular location is the cytoplasm. The protein resides in the cytosol. It localises to the late endosome membrane. Its function is as follows. Probable core component of the endosomal sorting required for transport complex III (ESCRT-III) which is involved in multivesicular bodies (MVBs) formation and sorting of endosomal cargo proteins into MVBs. MVBs contain intraluminal vesicles (ILVs) that are generated by invagination and scission from the limiting membrane of the endosome and mostly are delivered to lysosomes enabling degradation of membrane proteins, such as stimulated growth factor receptors, lysosomal enzymes and lipids. Key component of the cytokinesis checkpoint, a process required to delay abscission to prevent both premature resolution of intercellular chromosome bridges and accumulation of DNA damage. The polypeptide is Charged multivesicular body protein 4c (chmp4c) (Xenopus laevis (African clawed frog)).